The primary structure comprises 633 residues: Chitinase 2 (633 aa).

One can recognise a GH18 domain in the interval 151-602 (PKLSAYITDW…NAAREGLGYV (452 aa)). Residues 275-276 (QN) and 306-309 (GGWS) each bind chitin. The active-site Proton donor is the E349. Residues Y350, 422–425 (MSYD), and W582 contribute to the chitin site.

The protein belongs to the glycosyl hydrolase 18 family. In terms of assembly, semipurified toxin complex consists of at least YenA1-YenA2-YenB-YenC1-YenC2-Chi1-Chi2. The Yen-TC:K9 subcomplex is about 26 nm tall and 22 nm in diameter with 5-fold symmetry and 5 copies of YenA1, YenA2, Chi1 and Chi2; the chitinase subunits may be solvent accessible on the exterior the complex. The Yen-TC:K9 subcomplex has no insecticidal activity. The native complex with additional YenB, YenC1 and YenC2 subunits is 16 nm taller and is insecticidal; the toxicity-conferring subunits are present at about 1 copy each.

The protein resides in the secreted. The catalysed reaction is Random endo-hydrolysis of N-acetyl-beta-D-glucosaminide (1-&gt;4)-beta-linkages in chitin and chitodextrins.. Toxin complex is secreted when grown at 25 degrees Celsius or less; at higher temperatures the proteins are present intracellularly but not secreted. Part of an orally active toxin complex (TC) with strong insecticidal effects on larvae of the Coleoptera Costelytra zealandica, Acrossidius tasmania and Adoryphorus couloni and some Lepidoptera larvae. The TC has an endochitinase activity. This subunit might aid infection by degradation of the larval peritrophic membrane. The chain is Chitinase 2 from Yersinia entomophaga.